The sequence spans 374 residues: Ribosomal RNA large subunit methyltransferase G (374 aa).

It belongs to the methyltransferase superfamily. RlmG family.

Its subcellular location is the cytoplasm. The enzyme catalyses guanosine(1835) in 23S rRNA + S-adenosyl-L-methionine = N(2)-methylguanosine(1835) in 23S rRNA + S-adenosyl-L-homocysteine + H(+). In terms of biological role, specifically methylates the guanine in position 1835 (m2G1835) of 23S rRNA. The sequence is that of Ribosomal RNA large subunit methyltransferase G from Pseudomonas putida (strain ATCC 700007 / DSM 6899 / JCM 31910 / BCRC 17059 / LMG 24140 / F1).